A 666-amino-acid chain; its full sequence is Sodium/potassium/calcium exchanger 2 (666 aa).

Over 1-38 (MDLHQSPTARLLQKWCSHESPFGCRRHYNSRKKLKLIR) the chain is Cytoplasmic. A helical membrane pass occupies residues 39–59 (VIGLVMGLVAVSTVPFSISAF). Over 60 to 133 (TETDSQSNRG…DIFSLEERRK (74 aa)) the chain is Extracellular. Positions 63–122 (DSQSNRGEASDMSGPRVAQGHRQRTLLDLNDKIRDYTPQPPASQEDQAENSTEHTQGDYP) are disordered. The N-linked (GlcNAc...) asparagine glycan is linked to Asn-112. The span at 113 to 122 (STEHTQGDYP) shows a compositional bias: basic and acidic residues. Residues 134 to 154 (GAIILHVIGMIYMFIALAIVC) form a helical membrane-spanning segment. At 155 to 179 (DEFFVPSLTVITEKLGISDDVAGAT) the chain is on the cytoplasmic side. An Alpha-1 repeat occupies 175–215 (VAGATFMAAGGSAPELFTSLIGVFIAHSNVGIGTIVGSAVF). A helical transmembrane segment spans residues 180–200 (FMAAGGSAPELFTSLIGVFIA). Residues 201-205 (HSNVG) are Extracellular-facing. A helical transmembrane segment spans residues 206–226 (IGTIVGSAVFNILFVIGMCAL). Residues 227-237 (FSREILNLTWW) are Cytoplasmic-facing. Residues 238 to 258 (PLFRDVSFYIVDLLMLITFFL) form a helical membrane-spanning segment. Residues 259–260 (DN) lie on the Extracellular side of the membrane. A helical membrane pass occupies residues 261 to 281 (VIMWWESLLLLTAYFAYVVFM). The Cytoplasmic portion of the chain corresponds to 282–502 (KFNVQVERWV…PDVRKPASRK (221 aa)). The segment at 311–336 (KSPTAGDKDGPTLPSKPRLQRGGSSA) is disordered. Phosphoserine occurs at positions 337 and 341. The tract at residues 397–467 (VDENERQNGA…EEDDQPLSLS (71 aa)) is disordered. Residues 416 to 442 (PNSTSTEVEMTPSSEASEPVQNGNLSH) show a composition bias toward polar residues. The helical transmembrane segment at 503 to 523 (FFPITFFGSITWIAVFSYLMV) threads the bilayer. At 524-538 (WWAHQVGETIGISEE) the chain is on the extracellular side. The helical transmembrane segment at 539-559 (IMGLTILAAGTSIPDLITSVI) threads the bilayer. One copy of the Alpha-2 repeat lies at 546–577 (AAGTSIPDLITSVIVARKGLGDMAVSSSVGSN). The Cytoplasmic segment spans residues 560-574 (VARKGLGDMAVSSSV). The helical transmembrane segment at 575 to 595 (GSNIFDITVGLPLPWLLYTII) threads the bilayer. Topologically, residues 596-607 (HRFSPVTVSSNG) are extracellular. A helical membrane pass occupies residues 608–628 (LFCAIVLLFIMLLFVILSIAL). Residues 629–635 (CKWRMNK) lie on the Cytoplasmic side of the membrane. The chain crosses the membrane as a helical span at residues 636–656 (ILGFIMFGLYFVFLVVSVLLE). Over 657-666 (DKVLVCPVSI) the chain is Extracellular.

The protein belongs to the Ca(2+):cation antiporter (CaCA) (TC 2.A.19) family. SLC24A subfamily.

Its subcellular location is the cell membrane. It carries out the reaction Ca(2+)(out) + K(+)(out) + 4 Na(+)(in) = Ca(2+)(in) + K(+)(in) + 4 Na(+)(out). Functionally, calcium, potassium:sodium antiporter that transports 1 Ca(2+) and 1 K(+) in exchange for 4 Na(+). Required for learming and memory by regulating neuronal Ca(2+), which is essential for the development of synaptic plasticity. The polypeptide is Sodium/potassium/calcium exchanger 2 (Mus musculus (Mouse)).